The following is a 344-amino-acid chain: MSLDLDQVVADAQTAFASVEDNASLENEKARFLGKSGVLTDLLKGLGKLDPQTRKSEGARINLAKSRVEAALNDRRQALADALMNARLAAEAIDVTLPGRDVAEGSLHPVMNTWERVAQIFGSIGFDVADGPEIETDWMNFTALNNPDNHPARSMQDTFYIDGRDSDDKLLLLRTHTSPMQVRYARMHVEKYKHLDRIPPIKVIAPGRTYRVDSDATHSPMFHQVEGLWIADNISFADLKGVYTDFLRKFFESDDIQVRFRPSYFPFTEPSAEIDMAFGNGRWLEISGSGQVHPTVVRNMGLDPERYIGFAFGSGLERLTMLRYGINDLRLFFEGDVRFLRQFA.

Glu269 serves as a coordination point for Mg(2+).

Belongs to the class-II aminoacyl-tRNA synthetase family. Phe-tRNA synthetase alpha subunit type 1 subfamily. Tetramer of two alpha and two beta subunits. The cofactor is Mg(2+).

It is found in the cytoplasm. It carries out the reaction tRNA(Phe) + L-phenylalanine + ATP = L-phenylalanyl-tRNA(Phe) + AMP + diphosphate + H(+). In Ralstonia nicotianae (strain ATCC BAA-1114 / GMI1000) (Ralstonia solanacearum), this protein is Phenylalanine--tRNA ligase alpha subunit.